We begin with the raw amino-acid sequence, 199 residues long: Putative pseudouridine methyltransferase (199 aa).

2 residues coordinate S-adenosyl-L-methionine: Leu-132 and Cys-186.

The protein belongs to the methyltransferase superfamily. TrmY family.

It is found in the cytoplasm. The polypeptide is Putative pseudouridine methyltransferase (Vibrio campbellii (strain ATCC BAA-1116)).